A 280-amino-acid chain; its full sequence is uncharacterized protein (280 aa).

Residues 1–21 (MRPAIKVGLSTASVYPLRAEA) form the signal peptide.

It to M.leprae ML2432 and S.coelicolor SCO3347.

This is an uncharacterized protein from Mycobacterium tuberculosis (strain CDC 1551 / Oshkosh).